The primary structure comprises 466 residues: VGFKAGVKDYKLTYYTPDYETKDTDILAAFRVTPQPGVPPEEAGAAVAAESSTGTWTTVWTDGLTSLDRYKGRCYHIEPVAGEEDQYIAYVAYPLDLFEEGSVTNMFTSIVGNVFGFKALRALRLEDLRIPTAYVKTFQGPPHGIQVERDKLNKYGRPLLGCTIKPKLGLSAKNYGRAVYECLRGGLDFTKDDENVNSQPFMRWRDRFLFCAEALYKAQAETGEIKGHYLNATAGTCEEMMKRAVFARELGVPIVMHDYLTGGFTANTTLAHYCRDNGLLLHIHRAMHAVIDRQKNHGIHFRVLAKALRMSGGDHIHAGTVVGKLEGERDITLGFVDLLRDDFIQKDRSRGIYFTQDWVSMPGVLPVASGGIHVWHMPALTEIFGDDSVLQFGGGTLGHPWGNAPGAVANRVALEACVKARNEGRDLAREGNEIIREACKWSPELAAACEVWKEIKFEFKAVDTLD.

An N6,N6,N6-trimethyllysine modification is found at K4. 2 residues coordinate substrate: N113 and T163. The Proton acceptor role is filled by K165. A substrate-binding site is contributed by K167. Residues K191, D193, and E194 each coordinate Mg(2+). Position 191 is an N6-carboxylysine (K191). The active-site Proton acceptor is the H284. Substrate contacts are provided by R285, H317, and S369.

The protein belongs to the RuBisCO large chain family. Type I subfamily. As to quaternary structure, heterohexadecamer of 8 large chains and 8 small chains; disulfide-linked. The disulfide link is formed within the large subunit homodimers. Requires Mg(2+) as cofactor. In terms of processing, the disulfide bond which can form in the large chain dimeric partners within the hexadecamer appears to be associated with oxidative stress and protein turnover.

It localises to the plastid. The protein localises to the chloroplast. The enzyme catalyses 2 (2R)-3-phosphoglycerate + 2 H(+) = D-ribulose 1,5-bisphosphate + CO2 + H2O. The catalysed reaction is D-ribulose 1,5-bisphosphate + O2 = 2-phosphoglycolate + (2R)-3-phosphoglycerate + 2 H(+). RuBisCO catalyzes two reactions: the carboxylation of D-ribulose 1,5-bisphosphate, the primary event in carbon dioxide fixation, as well as the oxidative fragmentation of the pentose substrate in the photorespiration process. Both reactions occur simultaneously and in competition at the same active site. This Drimys winteri (Winter's bark) protein is Ribulose bisphosphate carboxylase large chain.